Consider the following 238-residue polypeptide: Ribonuclease PH (238 aa).

Phosphate is bound by residues arginine 86 and 124 to 126 (GTR).

The protein belongs to the RNase PH family. As to quaternary structure, homohexameric ring arranged as a trimer of dimers.

It catalyses the reaction tRNA(n+1) + phosphate = tRNA(n) + a ribonucleoside 5'-diphosphate. Functionally, phosphorolytic 3'-5' exoribonuclease that plays an important role in tRNA 3'-end maturation. Removes nucleotide residues following the 3'-CCA terminus of tRNAs; can also add nucleotides to the ends of RNA molecules by using nucleoside diphosphates as substrates, but this may not be physiologically important. Probably plays a role in initiation of 16S rRNA degradation (leading to ribosome degradation) during starvation. The protein is Ribonuclease PH of Chromobacterium violaceum (strain ATCC 12472 / DSM 30191 / JCM 1249 / CCUG 213 / NBRC 12614 / NCIMB 9131 / NCTC 9757 / MK).